Reading from the N-terminus, the 37-residue chain is Cytochrome b6-f complex subunit 5 (37 aa).

A helical transmembrane segment spans residues 5–25 (LLSGIVLGLIPITLAGLFVTA).

Belongs to the PetG family. In terms of assembly, the 4 large subunits of the cytochrome b6-f complex are cytochrome b6, subunit IV (17 kDa polypeptide, PetD), cytochrome f and the Rieske protein, while the 4 small subunits are PetG, PetL, PetM and PetN. The complex functions as a dimer.

It localises to the plastid. The protein localises to the chloroplast thylakoid membrane. Component of the cytochrome b6-f complex, which mediates electron transfer between photosystem II (PSII) and photosystem I (PSI), cyclic electron flow around PSI, and state transitions. PetG is required for either the stability or assembly of the cytochrome b6-f complex. This is Cytochrome b6-f complex subunit 5 from Zygnema circumcarinatum (Green alga).